Reading from the N-terminus, the 258-residue chain is UPF0246 protein MS0374 (258 aa).

This sequence belongs to the UPF0246 family.

This is UPF0246 protein MS0374 from Mannheimia succiniciproducens (strain KCTC 0769BP / MBEL55E).